The primary structure comprises 239 residues: Protein GrpE (239 aa).

2 disordered regions span residues 1–60 (MIEN…SNND) and 208–239 (SMGPGKQKSQQEVEKDTVEGDVDSDANTSEDV). Residues 28–42 (SMQNSTTENDELSSQ) are compositionally biased toward polar residues. Composition is skewed to basic and acidic residues over residues 43–53 (KTEEINTEELK) and 216–225 (SQQEVEKDTV). Positions 226–239 (EGDVDSDANTSEDV) are enriched in acidic residues.

Belongs to the GrpE family. In terms of assembly, homodimer.

The protein localises to the cytoplasm. Participates actively in the response to hyperosmotic and heat shock by preventing the aggregation of stress-denatured proteins, in association with DnaK and GrpE. It is the nucleotide exchange factor for DnaK and may function as a thermosensor. Unfolded proteins bind initially to DnaJ; upon interaction with the DnaJ-bound protein, DnaK hydrolyzes its bound ATP, resulting in the formation of a stable complex. GrpE releases ADP from DnaK; ATP binding to DnaK triggers the release of the substrate protein, thus completing the reaction cycle. Several rounds of ATP-dependent interactions between DnaJ, DnaK and GrpE are required for fully efficient folding. This chain is Protein GrpE, found in Prochlorococcus marinus (strain MIT 9301).